The chain runs to 429 residues: Septin-8 (429 aa).

Over residues 1-16 (MAATDLERVSNAEPEP) the composition is skewed to basic and acidic residues. Positions 1–23 (MAATDLERVSNAEPEPRSLSLGG) are disordered. A2 carries the N-acetylalanine modification. S10 is modified (phosphoserine). A Septin-type G domain is found at 41-307 (QGFSFNILCV…ELYRRCKLEE (267 aa)). Positions 51 to 58 (GETGIGKS) are G1 motif. GTP-binding positions include 51–58 (GETGIGKS), G106, 187–195 (KADTISKSE), G241, and R256. The segment at 103 to 106 (DAVG) is G3 motif. Residues 186–189 (AKAD) form a G4 motif region. Positions 320 to 412 (FSLQETYEAK…AAMEALQSQA (93 aa)) form a coiled coil. The segment covering 409 to 420 (QSQALHATSQQP) has biased composition (polar residues). Residues 409–429 (QSQALHATSQQPLRKDKDKKN) are disordered.

This sequence belongs to the TRAFAC class TrmE-Era-EngA-EngB-Septin-like GTPase superfamily. Septin GTPase family. Septins polymerize into heterooligomeric protein complexes that form filaments, and can associate with cellular membranes, actin filaments and microtubules. GTPase activity is required for filament formation. Interacts with SEPTIN5. Interacts with CDK14, SEPTIN4 and SEPTIN7. Interacts with VAMP2; the interaction inhibits interaction of VAMP2 with SYP. Interacts with STX1A.

The protein localises to the cytoplasm. It localises to the cytoskeleton. Its subcellular location is the synapse. The protein resides in the cell projection. It is found in the axon. The protein localises to the cytoplasmic vesicle. It localises to the secretory vesicle. Its subcellular location is the synaptic vesicle membrane. The protein resides in the presynapse. In terms of biological role, filament-forming cytoskeletal GTPase. May play a role in platelet secretion. Seems to participate in the process of SNARE complex formation in synaptic vesicles. The polypeptide is Septin-8 (Mus musculus (Mouse)).